Reading from the N-terminus, the 312-residue chain is Olfactory receptor 6X1 (312 aa).

The Extracellular segment spans residues 1–23 (MRNGTVITEFILLGFPVIQGLQT). A glycan (N-linked (GlcNAc...) asparagine) is linked at Asn3. The chain crosses the membrane as a helical span at residues 24 to 44 (PLFIAIFLTYILTLAGNGLII). The Cytoplasmic portion of the chain corresponds to 45–52 (ATVWAEPR). A helical transmembrane segment spans residues 53–73 (LQIPMYFFLCNLSFLEIWYTT). Topologically, residues 74 to 97 (TVIPKLLGTFVVARTVICMSCCLL) are extracellular. An intrachain disulfide couples Cys95 to Cys187. The chain crosses the membrane as a helical span at residues 98-118 (QAFFHFFVGTTEFLILTIMSF). The Cytoplasmic portion of the chain corresponds to 119 to 137 (DRYLTICNPLHHPTIMTSK). The helical transmembrane segment at 138 to 158 (LCLQLALSSWVVGFTIVFCQT) threads the bilayer. Topologically, residues 159-195 (MLLIQLPFCGNNVISHFYCDVGPSLKAACIDTSILEL) are extracellular. Residues 196 to 215 (LGVIATILVIPGSLLFNMIS) form a helical membrane-spanning segment. At 216-235 (YIYILSAILRIPSATGHQKT) the chain is on the cytoplasmic side. The helical transmembrane segment at 236–256 (FSTCASHLTVVSLLYGAVLFM) threads the bilayer. At 257 to 269 (YLRPTAHSSFKIN) the chain is on the extracellular side. Residues 270 to 290 (KVVSVLNTILTPLLNPFIYTI) traverse the membrane as a helical segment. The Cytoplasmic portion of the chain corresponds to 291-312 (RNKEVKGALRKAMTCPKTGHAK).

It belongs to the G-protein coupled receptor 1 family.

The protein localises to the cell membrane. In terms of biological role, odorant receptor. This Homo sapiens (Human) protein is Olfactory receptor 6X1 (OR6X1).